Reading from the N-terminus, the 235-residue chain is NAD(P)H-hydrate epimerase (235 aa).

Positions 18–221 (AAKIDEQLFS…GLVEEHGLQM (204 aa)) constitute a YjeF N-terminal domain. 65–69 (NNGGD) serves as a coordination point for (6S)-NADPHX. K(+) is bound by residues asparagine 66 and aspartate 127. (6S)-NADPHX is bound by residues 131–137 (GFSFKPP) and aspartate 160. Position 163 (serine 163) interacts with K(+).

This sequence belongs to the NnrE/AIBP family. The cofactor is K(+).

It catalyses the reaction (6R)-NADHX = (6S)-NADHX. The enzyme catalyses (6R)-NADPHX = (6S)-NADPHX. Its function is as follows. Catalyzes the epimerization of the S- and R-forms of NAD(P)HX, a damaged form of NAD(P)H that is a result of enzymatic or heat-dependent hydration. This is a prerequisite for the S-specific NAD(P)H-hydrate dehydratase to allow the repair of both epimers of NAD(P)HX. The polypeptide is NAD(P)H-hydrate epimerase (Caenorhabditis briggsae).